Consider the following 211-residue polypeptide: Homeobox protein Rhox5 (211 aa).

The tract at residues 38–129 (FFQAGEGRDE…PLRRPGSTQR (92 aa)) is disordered. 2 stretches are compositionally biased toward gly residues: residues 52-62 (GQPGEGAVGTE) and 70-84 (GGEG…GPVG). Residues 102-119 (HEPVAEGTESVKSEDKQM) show a composition bias toward basic and acidic residues. The segment at residues 119 to 176 (MPLRRPGSTQRRLAELERILLSSGSSSGGRSLIDGWISVCPECRNWFKIRRAAYRRNR) is a DNA-binding region (homeobox; atypical).

As to expression, highly expressed in placenta. Lower levels in testis, epididymis, ovary and skeletal muscle.

Its subcellular location is the nucleus. In terms of biological role, transcription factor required for differentiation of embryonic stem cells (ESCs) into primordial germ cells. This Rattus norvegicus (Rat) protein is Homeobox protein Rhox5 (Rhox5).